Here is a 185-residue protein sequence, read N- to C-terminus: Elongation factor P (185 aa).

It belongs to the elongation factor P family.

The protein resides in the cytoplasm. Its pathway is protein biosynthesis; polypeptide chain elongation. Its function is as follows. Involved in peptide bond synthesis. Stimulates efficient translation and peptide-bond synthesis on native or reconstituted 70S ribosomes in vitro. Probably functions indirectly by altering the affinity of the ribosome for aminoacyl-tRNA, thus increasing their reactivity as acceptors for peptidyl transferase. This is Elongation factor P from Limosilactobacillus fermentum (strain NBRC 3956 / LMG 18251) (Lactobacillus fermentum).